Reading from the N-terminus, the 244-residue chain is Adenosylcobinamide-GDP ribazoletransferase (244 aa).

Transmembrane regions (helical) follow at residues 31–51, 55–75, 109–129, 134–154, and 188–208; these read LLFY…ASHL, APAP…SGAL, IAVV…WVLV, GGWL…LFMG, and VVLG…VFLW.

The protein belongs to the CobS family. Requires Mg(2+) as cofactor.

It is found in the cell inner membrane. The catalysed reaction is alpha-ribazole + adenosylcob(III)inamide-GDP = adenosylcob(III)alamin + GMP + H(+). It catalyses the reaction alpha-ribazole 5'-phosphate + adenosylcob(III)inamide-GDP = adenosylcob(III)alamin 5'-phosphate + GMP + H(+). Its pathway is cofactor biosynthesis; adenosylcobalamin biosynthesis; adenosylcobalamin from cob(II)yrinate a,c-diamide: step 7/7. In terms of biological role, joins adenosylcobinamide-GDP and alpha-ribazole to generate adenosylcobalamin (Ado-cobalamin). Also synthesizes adenosylcobalamin 5'-phosphate from adenosylcobinamide-GDP and alpha-ribazole 5'-phosphate. This Pseudomonas entomophila (strain L48) protein is Adenosylcobinamide-GDP ribazoletransferase.